Reading from the N-terminus, the 187-residue chain is Interferon alpha-1/2 (187 aa).

An N-terminal signal peptide occupies residues 1–23 (MALPCSFSVALVLLSCHSLCCLA). 2 disulfide bridges follow: Cys24/Cys122 and Cys52/Cys160. Asn101 is a glycosylation site (N-linked (GlcNAc...) asparagine).

This sequence belongs to the alpha/beta interferon family.

Its subcellular location is the secreted. Functionally, produced by macrophages, IFN-alpha have antiviral activities. Interferon stimulates the production of two enzymes: a protein kinase and an oligoadenylate synthetase. The chain is Interferon alpha-1/2 from Canis lupus familiaris (Dog).